We begin with the raw amino-acid sequence, 949 residues long: MAASTGYVRLWAAARCWVLRRPLLAVTGGRVPSASGSWLRRGCRACDMSAPWGGRVLPGGVQWRGLWDSGNRGGSDETSEGGAEDGATASTGEGPVVTALAPMTVPDVFPHLPLIAITRNPVFPRFIKIVEVKNKKLVELLRRKVRLAQPYVGVFLKRDDNNESDVVESLDEIYHTGTFAQIHEMQDLGDKLRMIVTGHRRIHISRQLEVEPEGLEPEAEKQKSRRKLKRGKKEVEDELGPKPQLEMVTEAATDTSKEVLMVEVENVAHEDFQVTEEVKALTAEIVKTIRDIIALNPLYRESVLQMMQAGQRVVDNPIYLSDMGAALTGAESHELQDVLEETNILKRLYKALSLLKKEFELSKLQQRLGREVEEKIKQTHRKYLLQEQLKIIKKELGLEKDDKDAIEEKFRERLRELVVPKHVMDVVDEELSKLALLDNHSSEFNVTRNYLDWLTSIPWGRQSDENLDLARAQAVLEEDHYGMEDVKKRVLEFIAVSQLRGSTQGKILCFHGPPGVGKTSIARSIARALGREYFRFSVGGMTDVAEIKGHRRTYVGAMPGKIIQCLKKTKTENPLVLIDEVDKIGRGYQGDPSSALLELLDPEQNANFLDHYLDVPVDLSKVLFICTANVIDTIPEPLRDRMEMINVSGYVAQEKLAIAERYLVPQARTLCGLDESKAQLSAAVLTLLIKQYCRESGVRNLQKQVEKVLRKAAYKIVSGEAQTVQVTPENLQDFVGKPVFTVERMYEVTPPGVVMGLAWTAMGGSTLFVETSLRRPQPSGSKEDKDGSLEVTGQLGDVMKESARIAYTYARAFLMEQDPENDFLVTSHIHLHVPEGATPKDGPSAGCTIVTALLSLALGQPVLQNLAMTGEVSLTGKVLPVGGIKEKTIAAKRAGVTCIILPAENRKDYSDLAPFITEGLEVHFVEHYRDIFPIAFPRREHREALAVER.

The transit peptide at 1-65 (MAASTGYVRL…VLPGGVQWRG (65 aa)) directs the protein to the mitochondrion. Disordered regions lie at residues 68 to 94 (DSGNRGGSDETSEGGAEDGATASTGEG) and 213 to 240 (EGLEPEAEKQKSRRKLKRGKKEVEDELG). The Lon N-terminal domain maps to 112–359 (LPLIAITRNP…KALSLLKKEF (248 aa)). Over residues 223–232 (KSRRKLKRGK) the composition is skewed to basic residues. Residue 512–519 (GPPGVGKT) participates in ATP binding. Residues 748 to 938 (VTPPGVVMGL…RDIFPIAFPR (191 aa)) form the Lon proteolytic domain. Residues S844 and K887 contribute to the active site.

Belongs to the peptidase S16 family. In terms of assembly, homohexamer. Organized in a ring with a central cavity. The ATP-binding and proteolytic domains (AP-domain) form a hexameric chamber, while the N-terminal domain is arranged as a trimer of dimers. DNA and RNA binding is stimulated by substrate and inhibited by ATP binding. Interacts with TWNK and mitochondrial DNA polymerase subunit POLG. Detected in liver &gt; heart &gt; kidney &gt; testis.

The protein resides in the mitochondrion matrix. The catalysed reaction is Hydrolysis of proteins in presence of ATP.. ATP-dependent serine protease that mediates the selective degradation of misfolded, unassembled or oxidatively damaged polypeptides as well as certain short-lived regulatory proteins in the mitochondrial matrix. Endogenous substrates include mitochondrial steroidogenic acute regulatory (StAR) protein, DELE1, helicase Twinkle (TWNK) and the large ribosomal subunit protein MRPL32/bL32m. MRPL32/bL32m is protected from degradation by LONP1 when it is bound to a nucleic acid (RNA), but TWNK is not. May also have a chaperone function in the assembly of inner membrane protein complexes. Participates in the regulation of mitochondrial gene expression and in the maintenance of the integrity of the mitochondrial genome. Binds to mitochondrial promoters and RNA in a single-stranded, site-specific, and strand-specific manner. May regulate mitochondrial DNA replication and/or gene expression using site-specific, single-stranded DNA binding to target the degradation of regulatory proteins binding to adjacent sites in mitochondrial promoters. The sequence is that of Lon protease homolog, mitochondrial (Lonp1) from Mus musculus (Mouse).